The primary structure comprises 567 residues: Zinc finger protein 512 (567 aa).

Positions 1–34 are disordered; sequence MSSRLGAVPATPGPTPFKQQRSTRIVGAKNSRTQ. Residues K18 and K84 each participate in a glycyl lysine isopeptide (Lys-Gly) (interchain with G-Cter in SUMO2) cross-link. The tract at residues 87–148 is disordered; the sequence is AASHVEGPGG…QTRRIRKEPP (62 aa). Residues 119 to 130 are compositionally biased toward basic residues; that stretch reads KKHKLYGRKQRP. A C2H2-type 1 zinc finger spans residues 197-220; sequence FTCHHCGKQLRSLAGMKYHVMANH. K227 participates in a covalent cross-link: Glycyl lysine isopeptide (Lys-Gly) (interchain with G-Cter in SUMO2). The C2H2-type 2 zinc-finger motif lies at 287-310; it reads LKCHHCGKPYRSKAGLAYHLRSEH. K333 is covalently cross-linked (Glycyl lysine isopeptide (Lys-Gly) (interchain with G-Cter in SUMO2)). The segment at 406–430 adopts a C2H2-type 3; atypical zinc-finger fold; the sequence is IQCPNQGCEAVYSSVSGLKAHLGSC. The segment at 440–463 adopts a C2H2-type 3 zinc-finger fold; that stretch reads YKCLLCQKEFVSESGVKYHINSVH. Residues 485–494 are compositionally biased toward basic and acidic residues; it reads KQRQQEEEKR. The segment at 485–567 is disordered; it reads KQRQQEEEKR…PKTNHKRGKK (83 aa). A compositionally biased stretch (basic residues) spans 495-508; the sequence is RQQHRSRRSLRRRQ. Basic and acidic residues predominate over residues 523-544; it reads VGKDQRRNHEELLVATSRKEPE. The segment covering 556–567 has biased composition (basic residues); the sequence is RSPKTNHKRGKK.

Belongs to the krueppel C2H2-type zinc-finger protein family.

It localises to the nucleus. Functionally, may be involved in transcriptional regulation. In Bos taurus (Bovine), this protein is Zinc finger protein 512 (ZNF512).